The chain runs to 345 residues: MAEFWASPYGFALSMLLQGLAVIAFVMGSLIFMVYGDRKIWAAVQMRRGPNVVGPWGLLQTFADALKYIVKEIVIPAGADKFVYFLAPFLSMMLALFAFVVIPFDEGWVMANINVGILFIFAASSLEVYGVIMGGWASNSKYPFLASLRSAAQMISYEVSLGLIIIGIIISTGSMNLTAIVEAHGGDYGLLNWYWLPHLPMVVLFFVSALAECNRPPFDLVEAESELVAGFMTEYSSTPYLLFMAGEYIAMYLMCALLSLLFFGGWLSPVPFIADGWWWMVIKMWFWFYMFAMVKAIVPRYRYDQLMRIGWKVFLPLSLGWVVLVAILARYEILGGFWARFAVGG.

8 helical membrane passes run 15 to 35, 82 to 102, 115 to 135, 161 to 181, 190 to 210, 240 to 262, 278 to 298, and 309 to 329; these read MLLQ…FMVY, FVYF…FVVI, VGIL…IMGG, LGLI…TAIV, LLNW…VSAL, YLLF…SLLF, WWMV…KAIV, and IGWK…AILA.

It belongs to the complex I subunit 1 family. NDH-1 is composed of at least 14 different subunits, Nqo1 to Nqo14. The complex has a L-shaped structure, with the hydrophobic arm (subunits Nqo7, Nqo8, Nqo10 to Nqo14) embedded in the inner membrane and the hydrophilic peripheral arm (subunits Nqo1 to Nqo6, Nqo9) protruding into the bacterial cytoplasm. The hydrophilic domain contains all the redox centers.

It localises to the cell inner membrane. It carries out the reaction a quinone + NADH + 5 H(+)(in) = a quinol + NAD(+) + 4 H(+)(out). Functionally, NDH-1 shuttles electrons from NADH, via FMN and iron-sulfur (Fe-S) centers, to quinones in the respiratory chain. The immediate electron acceptor for the enzyme in this species is believed to be ubiquinone. Couples the redox reaction to proton translocation (for every two electrons transferred, four hydrogen ions are translocated across the cytoplasmic membrane), and thus conserves the redox energy in a proton gradient. The protein is NADH-quinone oxidoreductase subunit 8 of Paracoccus denitrificans.